A 210-amino-acid polypeptide reads, in one-letter code: MKKVALLDYGSGNLRSAQRALERVGAEVEVTNDPDVVLAADGLLVPGVGAFDACMKGLKAVQGDRMIGQRLAGGRPVMGICVGMQIMFDSGNEHGISAAGCGQWPGNVEKLEARVLPHMGWNTVEAAQDSQLFAGLDADTRFYFVHSYGVRWWEFEGDGLTRAPLVTWAQHESDRFVAAVENGALMATQFHPEKSGDAGAQLLRNWIDLL.

Residues 3 to 210 (KVALLDYGSG…QLLRNWIDLL (208 aa)) enclose the Glutamine amidotransferase type-1 domain. The active-site Nucleophile is the Cys-81. Residues His-191 and Glu-193 contribute to the active site.

Heterodimer of HisH and HisF.

It localises to the cytoplasm. The catalysed reaction is 5-[(5-phospho-1-deoxy-D-ribulos-1-ylimino)methylamino]-1-(5-phospho-beta-D-ribosyl)imidazole-4-carboxamide + L-glutamine = D-erythro-1-(imidazol-4-yl)glycerol 3-phosphate + 5-amino-1-(5-phospho-beta-D-ribosyl)imidazole-4-carboxamide + L-glutamate + H(+). It carries out the reaction L-glutamine + H2O = L-glutamate + NH4(+). It functions in the pathway amino-acid biosynthesis; L-histidine biosynthesis; L-histidine from 5-phospho-alpha-D-ribose 1-diphosphate: step 5/9. In terms of biological role, IGPS catalyzes the conversion of PRFAR and glutamine to IGP, AICAR and glutamate. The HisH subunit catalyzes the hydrolysis of glutamine to glutamate and ammonia as part of the synthesis of IGP and AICAR. The resulting ammonia molecule is channeled to the active site of HisF. The polypeptide is Imidazole glycerol phosphate synthase subunit HisH (Corynebacterium diphtheriae (strain ATCC 700971 / NCTC 13129 / Biotype gravis)).